Reading from the N-terminus, the 445-residue chain is Phosphoglucosamine mutase (445 aa).

Catalysis depends on Ser-103, which acts as the Phosphoserine intermediate. 4 residues coordinate Mg(2+): Ser-103, Asp-240, Asp-242, and Asp-244. Ser-103 is subject to Phosphoserine.

This sequence belongs to the phosphohexose mutase family. Mg(2+) serves as cofactor. In terms of processing, activated by phosphorylation.

It catalyses the reaction alpha-D-glucosamine 1-phosphate = D-glucosamine 6-phosphate. Functionally, catalyzes the conversion of glucosamine-6-phosphate to glucosamine-1-phosphate. This Cellvibrio japonicus (strain Ueda107) (Pseudomonas fluorescens subsp. cellulosa) protein is Phosphoglucosamine mutase.